The primary structure comprises 316 residues: 4-hydroxy-3-methylbut-2-enyl diphosphate reductase (316 aa).

Position 12 (C12) interacts with [4Fe-4S] cluster. (2E)-4-hydroxy-3-methylbut-2-enyl diphosphate contacts are provided by H41 and H74. Positions 41 and 74 each coordinate dimethylallyl diphosphate. Residues H41 and H74 each contribute to the isopentenyl diphosphate site. [4Fe-4S] cluster is bound at residue C96. (2E)-4-hydroxy-3-methylbut-2-enyl diphosphate is bound at residue H124. H124 contributes to the dimethylallyl diphosphate binding site. H124 provides a ligand contact to isopentenyl diphosphate. E126 serves as the catalytic Proton donor. Position 165 (T165) interacts with (2E)-4-hydroxy-3-methylbut-2-enyl diphosphate. Position 195 (C195) interacts with [4Fe-4S] cluster. Residues S223, S224, N225, and S267 each coordinate (2E)-4-hydroxy-3-methylbut-2-enyl diphosphate. Residues S223, S224, N225, and S267 each coordinate dimethylallyl diphosphate. Isopentenyl diphosphate contacts are provided by S223, S224, N225, and S267.

It belongs to the IspH family. The cofactor is [4Fe-4S] cluster.

It catalyses the reaction isopentenyl diphosphate + 2 oxidized [2Fe-2S]-[ferredoxin] + H2O = (2E)-4-hydroxy-3-methylbut-2-enyl diphosphate + 2 reduced [2Fe-2S]-[ferredoxin] + 2 H(+). The catalysed reaction is dimethylallyl diphosphate + 2 oxidized [2Fe-2S]-[ferredoxin] + H2O = (2E)-4-hydroxy-3-methylbut-2-enyl diphosphate + 2 reduced [2Fe-2S]-[ferredoxin] + 2 H(+). The protein operates within isoprenoid biosynthesis; dimethylallyl diphosphate biosynthesis; dimethylallyl diphosphate from (2E)-4-hydroxy-3-methylbutenyl diphosphate: step 1/1. It functions in the pathway isoprenoid biosynthesis; isopentenyl diphosphate biosynthesis via DXP pathway; isopentenyl diphosphate from 1-deoxy-D-xylulose 5-phosphate: step 6/6. Functionally, catalyzes the conversion of 1-hydroxy-2-methyl-2-(E)-butenyl 4-diphosphate (HMBPP) into a mixture of isopentenyl diphosphate (IPP) and dimethylallyl diphosphate (DMAPP). Acts in the terminal step of the DOXP/MEP pathway for isoprenoid precursor biosynthesis. In Acidithiobacillus ferrooxidans (strain ATCC 53993 / BNL-5-31) (Leptospirillum ferrooxidans (ATCC 53993)), this protein is 4-hydroxy-3-methylbut-2-enyl diphosphate reductase.